The chain runs to 685 residues: Diphthine--ammonia ligase (685 aa).

This sequence in the C-terminal section; belongs to the RutC family. The protein in the N-terminal section; belongs to the Diphthine--ammonia ligase family. In terms of assembly, interacts with elongation factor 2 (eEF-2; EFT1 or EFT2).

The protein resides in the cytoplasm. It carries out the reaction diphthine-[translation elongation factor 2] + NH4(+) + ATP = diphthamide-[translation elongation factor 2] + AMP + diphosphate + H(+). The protein operates within protein modification; peptidyl-diphthamide biosynthesis. Its function is as follows. Amidase that catalyzes the last step of diphthamide biosynthesis using ammonium and ATP. Diphthamide biosynthesis consists in the conversion of an L-histidine residue in the translation elongation factor eEF-2 (EFT1 or EFT2) to diphthamide. In Saccharomyces cerevisiae (strain ATCC 204508 / S288c) (Baker's yeast), this protein is Diphthine--ammonia ligase (DPH6).